The primary structure comprises 320 residues: MSRTSDGNTAELWVPTGSATVRVPGKVNLYLAVGDRRDDGYHELTTVFHAVSLVDEVTVRNADLLSLEVVGEGADRLPTDKRNLAWQAAELMAEHVGRAPDVSIFIDKSIPVAGGMAGGSADAAAVLVAMNSLWELNLPRRDLRMLAARLGSDVPFALHGGTALGTGRGEELATVLSRNTFHWVLAFARSGLSTPAVFTELDRLRDVGSPPRLAEPGPVLAALAAGDPEQLAPLLGNEMQAAAVSLDPALRRALRAGVEAGALAGIVSGSGPTCAFLCRTAESALDVSAQLSGAGVCRTVRIATGPVPGARVVPTPGIAE.

Residue Lys26 is part of the active site. An ATP-binding site is contributed by 111–121 (PVAGGMAGGSA). Asp153 is a catalytic residue.

Belongs to the GHMP kinase family. IspE subfamily.

It carries out the reaction 4-CDP-2-C-methyl-D-erythritol + ATP = 4-CDP-2-C-methyl-D-erythritol 2-phosphate + ADP + H(+). Its pathway is isoprenoid biosynthesis; isopentenyl diphosphate biosynthesis via DXP pathway; isopentenyl diphosphate from 1-deoxy-D-xylulose 5-phosphate: step 3/6. Catalyzes the phosphorylation of the position 2 hydroxy group of 4-diphosphocytidyl-2C-methyl-D-erythritol. The protein is 4-diphosphocytidyl-2-C-methyl-D-erythritol kinase of Mycobacterium marinum (strain ATCC BAA-535 / M).